A 182-amino-acid polypeptide reads, in one-letter code: UPF0316 protein BCB4264_A3368 (182 aa).

The next 3 membrane-spanning stretches (helical) occupy residues 6-26 (LIFV…ILLV), 32-52 (SAAG…GIVF), and 58-78 (WMNI…GGYI).

It belongs to the UPF0316 family.

The protein resides in the cell membrane. This is UPF0316 protein BCB4264_A3368 from Bacillus cereus (strain B4264).